The following is a 631-amino-acid chain: DNA mismatch repair protein MutL (631 aa).

It belongs to the DNA mismatch repair MutL/HexB family.

This protein is involved in the repair of mismatches in DNA. It is required for dam-dependent methyl-directed DNA mismatch repair. May act as a 'molecular matchmaker', a protein that promotes the formation of a stable complex between two or more DNA-binding proteins in an ATP-dependent manner without itself being part of a final effector complex. This chain is DNA mismatch repair protein MutL, found in Lactobacillus acidophilus (strain ATCC 700396 / NCK56 / N2 / NCFM).